A 274-amino-acid polypeptide reads, in one-letter code: MKQYLDLVKYVLNNGTQKGDRTGTGTKSVFGYQMRFNLAEGFPMVTTKKLHLKSIIHELLWFLKGETNIAYLQQNGVKIWDDWADENGELGPVYGHQWRNWNNEEIDQITELIETLKINPNSRRMLVSAWNPSVLPDTTKSFAENVANAKVALPPCHAFFQFYVSEGKLSCQLYQRSADIFLGVPFNIASYALFTMMIAQVCDLQAGEFIHTFGDAHIYNNHFEQVALQLSREPKPLPKMILNPAVKNIFDFKFEDFKLEGYESHAHIKGAVAV.

Arg21 serves as a coordination point for dUMP. His51 contributes to the (6R)-5,10-methylene-5,6,7,8-tetrahydrofolate binding site. 123–124 is a binding site for dUMP; the sequence is RR. Cys156 functions as the Nucleophile in the catalytic mechanism. DUMP contacts are provided by residues 176-179, Asn187, and 217-219; these read RSAD and HIY. (6R)-5,10-methylene-5,6,7,8-tetrahydrofolate is bound at residue Asp179. Ala273 serves as a coordination point for (6R)-5,10-methylene-5,6,7,8-tetrahydrofolate.

Belongs to the thymidylate synthase family. Bacterial-type ThyA subfamily. As to quaternary structure, homodimer.

The protein localises to the cytoplasm. It catalyses the reaction dUMP + (6R)-5,10-methylene-5,6,7,8-tetrahydrofolate = 7,8-dihydrofolate + dTMP. It functions in the pathway pyrimidine metabolism; dTTP biosynthesis. In terms of biological role, catalyzes the reductive methylation of 2'-deoxyuridine-5'-monophosphate (dUMP) to 2'-deoxythymidine-5'-monophosphate (dTMP) while utilizing 5,10-methylenetetrahydrofolate (mTHF) as the methyl donor and reductant in the reaction, yielding dihydrofolate (DHF) as a by-product. This enzymatic reaction provides an intracellular de novo source of dTMP, an essential precursor for DNA biosynthesis. The chain is Thymidylate synthase from Flavobacterium psychrophilum (strain ATCC 49511 / DSM 21280 / CIP 103535 / JIP02/86).